A 597-amino-acid chain; its full sequence is uncharacterized protein (597 aa).

One can recognise a PWWP domain in the interval 16–78 (VGRLVWVRRR…LENSKTVKAF (63 aa)). Disordered regions lie at residues 126–210 (NLCN…MRGL) and 449–482 (QLKGKRNSRQMSKKQEERRNVYGEEANNNSSTPH). Over residues 134 to 143 (EDSKRCLSGK) the composition is skewed to basic and acidic residues. A compositionally biased stretch (acidic residues) spans 144-161 (EDEDSGSSDAEETEDDEL). The span at 166 to 185 (EQLQSSISSQEMNNVGASKV) shows a compositional bias: polar residues. Residues 450–460 (LKGKRNSRQMS) show a composition bias toward basic residues. Basic and acidic residues predominate over residues 461–470 (KKQEERRNVY).

This is an uncharacterized protein from Arabidopsis thaliana (Mouse-ear cress).